The following is a 472-amino-acid chain: Adenosylhomocysteinase (472 aa).

3 residues coordinate substrate: Thr-60, Asp-136, and Glu-197. Residue Thr-198 to Thr-200 coordinates NAD(+). Residues Lys-227 and Asp-231 each contribute to the substrate site. NAD(+) contacts are provided by residues Asn-232, Gly-261–Gly-266, Glu-284, Asn-319, Ile-340–His-342, and Asn-388.

This sequence belongs to the adenosylhomocysteinase family. NAD(+) is required as a cofactor.

The protein resides in the cytoplasm. The enzyme catalyses S-adenosyl-L-homocysteine + H2O = L-homocysteine + adenosine. It functions in the pathway amino-acid biosynthesis; L-homocysteine biosynthesis; L-homocysteine from S-adenosyl-L-homocysteine: step 1/1. Functionally, may play a key role in the regulation of the intracellular concentration of adenosylhomocysteine. This Maridesulfovibrio salexigens (strain ATCC 14822 / DSM 2638 / NCIMB 8403 / VKM B-1763) (Desulfovibrio salexigens) protein is Adenosylhomocysteinase.